Here is a 737-residue protein sequence, read N- to C-terminus: Protein kinase C epsilon type (737 aa).

A C2 domain is found at 1 to 117 (MVVFNGLLKI…NGSRHFEDWI (117 aa)). At S62 the chain carries Phosphoserine. The Phorbol-ester/DAG-type 1 zinc finger occupies 169–220 (GHKFMATYLRQPTYCSHCRDFIWGVIGKQGYQCQVCTCVVHKRCHELIITKC). An Interaction with actin motif is present at residues 223–228 (LKKQET). At T228 the chain carries Phosphothreonine. S234 bears the Phosphoserine mark. A Phorbol-ester/DAG-type 2 zinc finger spans residues 242 to 292 (PHKFGIHNYKVPTFCDHCGSLLWGLLRQGLQCKVCKMNVHRRCETNVAPNC). T309 bears the Phosphothreonine mark. Residues 310–356 (PDKITNSGQRRKKLAAGAESPQPASGNSPSEDDRSKSAPTSPCDQEL) form a disordered region. Phosphoserine is present on residues S316, S329, S337, and S346. A Phosphothreonine modification is found at T349. S350 is subject to Phosphoserine; by MAPK11 and MAPK14. Phosphoserine is present on residues S368 and S388. A disordered region spans residues 369–398 (FDNRGEEHRASSSTDGQLASPGENGEVRQG). A Protein kinase domain is found at 408–668 (FNFIKVLGKG…EDAIKQHPFF (261 aa)). Residues 414-422 (LGKGSFGKV) and K437 contribute to the ATP site. D532 serves as the catalytic Proton acceptor. Phosphothreonine; by PDPK1 is present on T566. The 69-residue stretch at 669–737 (KEIDWVLLEQ…FSYFGEDLMP (69 aa)) folds into the AGC-kinase C-terminal domain. 2 positions are modified to phosphothreonine: T703 and T710. S729 is subject to Phosphoserine.

It belongs to the protein kinase superfamily. AGC Ser/Thr protein kinase family. PKC subfamily. Forms a ternary complex with TRIM63 and RACK1/GN2BL1. Can form a complex with PDLIM5 and N-type calcium channel. Interacts with COPB1. Interacts with DGKQ. Interacts with STAT3. Interacts with YWHAB. Interacts with HSP90AB1; promotes functional activation in a heat shock-dependent manner. Interacts (via phorbol-ester/DAG-type 2 domain) with PRPH and VIM. Interacts with NLRP5/MATER. Phosphorylation on Thr-566 by PDPK1 triggers autophosphorylation on Ser-729. Phosphorylation in the hinge domain at Ser-350 by MAPK11 or MAPK14, Ser-346 by GSK3B and Ser-368 by autophosphorylation is required for interaction with YWHAB. In response to growth factors, phosphorylated at Thr-703 and Ser-729 by the mTORC2 complex, promoting autophosphorylation and activation of PRKCE.

It localises to the cytoplasm. It is found in the cytoskeleton. The protein resides in the cell membrane. Its subcellular location is the perinuclear region. The protein localises to the nucleus. It catalyses the reaction L-seryl-[protein] + ATP = O-phospho-L-seryl-[protein] + ADP + H(+). It carries out the reaction L-threonyl-[protein] + ATP = O-phospho-L-threonyl-[protein] + ADP + H(+). With respect to regulation, novel PKCs (PRKCD, PRKCE, PRKCH and PRKCQ) are calcium-insensitive, but activated by diacylglycerol (DAG) and phosphatidylserine. Three specific sites; Thr-566 (activation loop of the kinase domain), Thr-710 (turn motif) and Ser-729 (hydrophobic region), need to be phosphorylated for its full activation. Calcium-independent, phospholipid- and diacylglycerol (DAG)-dependent serine/threonine-protein kinase that plays essential roles in the regulation of multiple cellular processes linked to cytoskeletal proteins, such as cell adhesion, motility, migration and cell cycle, functions in neuron growth and ion channel regulation, and is involved in immune response, cancer cell invasion and regulation of apoptosis. Mediates cell adhesion to the extracellular matrix via integrin-dependent signaling, by mediating angiotensin-2-induced activation of integrin beta-1 (ITGB1) in cardiac fibroblasts. Phosphorylates MARCKS, which phosphorylates and activates PTK2/FAK, leading to the spread of cardiomyocytes. Involved in the control of the directional transport of ITGB1 in mesenchymal cells by phosphorylating vimentin (VIM), an intermediate filament (IF) protein. In epithelial cells, associates with and phosphorylates keratin-8 (KRT8), which induces targeting of desmoplakin at desmosomes and regulates cell-cell contact. Phosphorylates IQGAP1, which binds to CDC42, mediating epithelial cell-cell detachment prior to migration. During cytokinesis, forms a complex with YWHAB, which is crucial for daughter cell separation, and facilitates abscission by a mechanism which may implicate the regulation of RHOA. In cardiac myocytes, regulates myofilament function and excitation coupling at the Z-lines, where it is indirectly associated with F-actin via interaction with COPB1. During endothelin-induced cardiomyocyte hypertrophy, mediates activation of PTK2/FAK, which is critical for cardiomyocyte survival and regulation of sarcomere length. Plays a role in the pathogenesis of dilated cardiomyopathy via persistent phosphorylation of troponin I (TNNI3). Involved in nerve growth factor (NFG)-induced neurite outgrowth and neuron morphological change independently of its kinase activity, by inhibition of RHOA pathway, activation of CDC42 and cytoskeletal rearrangement. May be involved in presynaptic facilitation by mediating phorbol ester-induced synaptic potentiation. Phosphorylates gamma-aminobutyric acid receptor subunit gamma-2 (GABRG2), which reduces the response of GABA receptors to ethanol and benzodiazepines and may mediate acute tolerance to the intoxicating effects of ethanol. Upon PMA treatment, phosphorylates the capsaicin- and heat-activated cation channel TRPV1, which is required for bradykinin-induced sensitization of the heat response in nociceptive neurons. Is able to form a complex with PDLIM5 and N-type calcium channel, and may enhance channel activities and potentiates fast synaptic transmission by phosphorylating the pore-forming alpha subunit CACNA1B (CaV2.2). Downstream of TLR4, plays an important role in the lipopolysaccharide (LPS)-induced immune response by phosphorylating and activating TICAM2/TRAM, which in turn activates the transcription factor IRF3 and subsequent cytokines production. In differentiating erythroid progenitors, is regulated by EPO and controls the protection against the TNFSF10/TRAIL-mediated apoptosis, via BCL2. May be involved in the regulation of the insulin-induced phosphorylation and activation of AKT1. Phosphorylates NLRP5/MATER and may thereby modulate AKT pathway activation in cumulus cells. Phosphorylates and activates LRRK1, which phosphorylates RAB proteins involved in intracellular trafficking. This is Protein kinase C epsilon type (Prkce) from Rattus norvegicus (Rat).